The sequence spans 287 residues: Seed leukoagglutinin (287 aa).

The signal sequence occupies residues 1–29; that stretch reads MATSNSKPTQVLLATFLTFFFLLLNNVNS. Tyrosine 74 contributes to the N-acetyl-alpha-neuraminyl-(2-&gt;3)-beta-D-galactosyl-(1-&gt;4)-beta-D-glucose binding site. N-linked (GlcNAc...) (paucimannose) asparagine glycosylation occurs at asparagine 90. N-acetyl-alpha-neuraminyl-(2-&gt;3)-beta-D-galactosyl-(1-&gt;4)-beta-D-glucose contacts are provided by aspartate 116, serine 133, and lysine 136. Asparagine 142 carries N-linked (GlcNAc...) (paucimannose) asparagine glycosylation. Mn(2+)-binding residues include glutamate 156 and aspartate 158. Residues aspartate 158, tyrosine 160, aspartate 166, and aspartate 169 each contribute to the Ca(2+) site. The N-acetyl-alpha-neuraminyl-(2-&gt;3)-beta-D-galactosyl-(1-&gt;4)-beta-D-glucose site is built by tyrosine 160 and aspartate 166. The Mn(2+) site is built by aspartate 169 and histidine 174. A glycan (N-linked (GlcNAc...) (high mannose) asparagine; partial) is linked at asparagine 208. N-linked (GlcNAc...) (paucimannose) asparagine; partial glycosylation occurs at asparagine 220. Glutamate 253 serves as a coordination point for N-acetyl-alpha-neuraminyl-(2-&gt;3)-beta-D-galactosyl-(1-&gt;4)-beta-D-glucose. Positions 279–287 are cleaved as a propeptide — removed in mature form; sequence NVHIARYTA.

This sequence belongs to the leguminous lectin family. As to quaternary structure, homodimer; disulfide-linked. Dimer of homodimers. The glycosylation on N-90 is determined to by of the high mannose type in PubMed:26003537, while PubMed:27720757 found a paucimannose at this position. Post-translationally, processed at its C-terminus.

Its function is as follows. Sialic acid-binding lectin recognizing oligosaccharides containing terminal sialic acid linked via alpha-2,3 bond to penultimate galactose residues. Binds the trisaccharide sequence Neu5Ac-alpha-2,3-Gal-beta-1,4-GlcNAc. Binds fetuin when fully glycosylated but not when the high mannose-type glycans are removed, although the secondary structure is virtually unaffected by deglycosylation of the high mannose-type glycans. The lectin activity may depend on the presence of a single GlcNAc attached to N-90. The sequence is that of Seed leukoagglutinin from Maackia amurensis (Amur maackia).